A 307-amino-acid chain; its full sequence is tRNA N6-adenosine threonylcarbamoyltransferase (307 aa).

His-108 and His-112 together coordinate Fe cation. Residues 131–135, Asp-164, Gly-177, Asp-181, and Asn-266 contribute to the substrate site; that span reads IVSGG. Fe cation is bound at residue Asp-290.

The protein belongs to the KAE1 / TsaD family. The cofactor is Fe(2+).

The protein resides in the cytoplasm. The catalysed reaction is L-threonylcarbamoyladenylate + adenosine(37) in tRNA = N(6)-L-threonylcarbamoyladenosine(37) in tRNA + AMP + H(+). In terms of biological role, required for the formation of a threonylcarbamoyl group on adenosine at position 37 (t(6)A37) in tRNAs that read codons beginning with adenine. Is involved in the transfer of the threonylcarbamoyl moiety of threonylcarbamoyl-AMP (TC-AMP) to the N6 group of A37, together with TsaE and TsaB. TsaD likely plays a direct catalytic role in this reaction. This chain is tRNA N6-adenosine threonylcarbamoyltransferase, found in Mycoplasmopsis synoviae (strain 53) (Mycoplasma synoviae).